Here is a 314-residue protein sequence, read N- to C-terminus: tRNA dimethylallyltransferase (314 aa).

An ATP-binding site is contributed by 13–20 (GPTAIGKT). 15–20 (TAIGKT) serves as a coordination point for substrate. The interval 38–41 (DSMQ) is interaction with substrate tRNA.

It belongs to the IPP transferase family. Monomer. The cofactor is Mg(2+).

It catalyses the reaction adenosine(37) in tRNA + dimethylallyl diphosphate = N(6)-dimethylallyladenosine(37) in tRNA + diphosphate. In terms of biological role, catalyzes the transfer of a dimethylallyl group onto the adenine at position 37 in tRNAs that read codons beginning with uridine, leading to the formation of N6-(dimethylallyl)adenosine (i(6)A). The sequence is that of tRNA dimethylallyltransferase from Desulfotalea psychrophila (strain LSv54 / DSM 12343).